Consider the following 418-residue polypeptide: MTLLALGINHKTAPVALRERVTFSPETLDKALESLLAQPMVQGGVVLSTCNRTELYLSVEEQDNLQEALIRWLCNYHGLNEEDLRKSLYWHQDNDAVSHLMRVASGLDSLVLGEPQILGQVKKAFADSSRGHLNVSELERMFQKSFSVAKRVRTETDIGASAVSVAFAACTLARQIFESLSSVTVLLVGAGETIELVARHLREHHVRKMVIANRTRERAQALAEEVGAEVIALSDIDERLKEADIIISSTASPLPIIGKGMVERALKARRNQPMLLVDIAVPRDVEPEVGKLANAYLYSVDDLQNIIQHNLAQRKAAAVQAESIVEQETSEFMAWLRAQSASETIREYRSQSEQVREELTAKALAALEQGGDAQEIMQDLARKLTNRLIHAPTKSLQQAARDGDDERLHILRNSLGLE.

Substrate-binding positions include 49 to 52, S109, 114 to 116, and Q120; these read TCNR and EPQ. C50 acts as the Nucleophile in catalysis. NADP(+) is bound at residue 189 to 194; that stretch reads GAGETI.

This sequence belongs to the glutamyl-tRNA reductase family. In terms of assembly, homodimer.

The catalysed reaction is (S)-4-amino-5-oxopentanoate + tRNA(Glu) + NADP(+) = L-glutamyl-tRNA(Glu) + NADPH + H(+). Its pathway is porphyrin-containing compound metabolism; protoporphyrin-IX biosynthesis; 5-aminolevulinate from L-glutamyl-tRNA(Glu): step 1/2. Its function is as follows. Catalyzes the NADPH-dependent reduction of glutamyl-tRNA(Glu) to glutamate 1-semialdehyde (GSA). This chain is Glutamyl-tRNA reductase, found in Klebsiella pneumoniae subsp. pneumoniae (strain ATCC 700721 / MGH 78578).